Consider the following 394-residue polypeptide: uncharacterized protein (394 aa).

Residues serine 117 and serine 121 each carry the phosphoserine modification. 3 disordered regions span residues 177–295, 315–347, and 370–394; these read DSDE…PGTF, KRSIMLPQDIDPTFPDSEPEDDGHASSTVGSLS, and SSEVLRNSKSPPLDIARKAVGAHRV. Acidic residues predominate over residues 178–190; it reads SDEEDEVDDEEIE. Composition is skewed to polar residues over residues 191–207 and 216–230; these read SFNSFSRKMQTISNSRY and EKQSCSSESDRVSQI. Acidic residues-rich tracts occupy residues 231 to 263 and 284 to 295; these read SDDEEDEEGSADEEDEEDSDVELSESSLSDDED and IPDDTDFVPGTF. Residues 370–379 show a composition bias toward polar residues; sequence SSEVLRNSKS. Phosphoserine is present on serine 379.

Its subcellular location is the nucleus. This is an uncharacterized protein from Schizosaccharomyces pombe (strain 972 / ATCC 24843) (Fission yeast).